An 80-amino-acid polypeptide reads, in one-letter code: Acyl carrier protein (80 aa).

One can recognise a Carrier domain in the interval 1–79 (MTEEEIFNKI…EAVEYIKSHQ (79 aa)). An O-(pantetheine 4'-phosphoryl)serine modification is found at Ser-39.

It belongs to the acyl carrier protein (ACP) family. In terms of processing, 4'-phosphopantetheine is transferred from CoA to a specific serine of apo-ACP by AcpS. This modification is essential for activity because fatty acids are bound in thioester linkage to the sulfhydryl of the prosthetic group.

It localises to the cytoplasm. It participates in lipid metabolism; fatty acid biosynthesis. In terms of biological role, carrier of the growing fatty acid chain in fatty acid biosynthesis. The sequence is that of Acyl carrier protein from Lactobacillus johnsonii (strain CNCM I-12250 / La1 / NCC 533).